The sequence spans 1092 residues: Isoleucine--tRNA ligase (1092 aa).

A 'HIGH' region motif is present at residues 53–63 (PFANGLPHYGH). A 'KMSKS' region motif is present at residues 613–617 (KLSKR). K616 provides a ligand contact to ATP.

Belongs to the class-I aminoacyl-tRNA synthetase family. IleS type 2 subfamily. Monomer. Requires Zn(2+) as cofactor.

It localises to the cytoplasm. The enzyme catalyses tRNA(Ile) + L-isoleucine + ATP = L-isoleucyl-tRNA(Ile) + AMP + diphosphate. Functionally, catalyzes the attachment of isoleucine to tRNA(Ile). As IleRS can inadvertently accommodate and process structurally similar amino acids such as valine, to avoid such errors it has two additional distinct tRNA(Ile)-dependent editing activities. One activity is designated as 'pretransfer' editing and involves the hydrolysis of activated Val-AMP. The other activity is designated 'posttransfer' editing and involves deacylation of mischarged Val-tRNA(Ile). The sequence is that of Isoleucine--tRNA ligase from Rickettsia conorii (strain ATCC VR-613 / Malish 7).